The following is a 103-amino-acid chain: MSGRGKGGKGLGKGGAKRHRRVLRDNIQGITKPAIRRLARRGGVKRISGLIYEETRGVLKVFLENVIRDAVTYTEHARRKTVTAMDVVYALKRQGRTLYGFGG.

Positions 1–14 (MSGRGKGGKGLGKG) are enriched in gly residues. The segment at 1–20 (MSGRGKGGKGLGKGGAKRHR) is disordered. Position 2 is an N-acetylserine (Ser2). Lys17 bears the N6-acetyllysine mark. A DNA-binding region spans residues 17 to 21 (KRHRR). An N6-methylated lysine modification is found at Lys80.

It belongs to the histone H4 family. The nucleosome is a histone octamer containing two molecules each of H2A, H2B, H3 and H4 assembled in one H3-H4 heterotetramer and two H2A-H2B heterodimers. The octamer wraps approximately 147 bp of DNA.

The protein resides in the nucleus. It is found in the chromosome. Its function is as follows. Core component of nucleosome. Nucleosomes wrap and compact DNA into chromatin, limiting DNA accessibility to the cellular machineries which require DNA as a template. Histones thereby play a central role in transcription regulation, DNA repair, DNA replication and chromosomal stability. DNA accessibility is regulated via a complex set of post-translational modifications of histones, also called histone code, and nucleosome remodeling. This Olisthodiscus luteus (Marine phytoflagellate) protein is Histone H4.